Reading from the N-terminus, the 430-residue chain is Bifunctional protein GlmU (430 aa).

A pyrophosphorylase region spans residues Met-1 to Lys-223. UDP-N-acetyl-alpha-D-glucosamine is bound by residues Leu-8 to Gly-11, Lys-22, and Gly-81 to Thr-82. Asp-102 contacts Mg(2+). Gly-135, Glu-149, Asn-164, and Asn-221 together coordinate UDP-N-acetyl-alpha-D-glucosamine. Residue Asn-221 coordinates Mg(2+). Residues Tyr-224 to Gln-244 are linker. Residues Gly-245 to Asn-430 are N-acetyltransferase. The UDP-N-acetyl-alpha-D-glucosamine site is built by Arg-308 and Lys-325. The active-site Proton acceptor is the His-336. Residues Tyr-339 and Asn-350 each coordinate UDP-N-acetyl-alpha-D-glucosamine. Acetyl-CoA contacts are provided by residues Ala-353, Asn-359 to Tyr-360, Ser-378, Ala-396, and Arg-413.

It in the N-terminal section; belongs to the N-acetylglucosamine-1-phosphate uridyltransferase family. The protein in the C-terminal section; belongs to the transferase hexapeptide repeat family. In terms of assembly, homotrimer. Mg(2+) is required as a cofactor.

It is found in the cytoplasm. It carries out the reaction alpha-D-glucosamine 1-phosphate + acetyl-CoA = N-acetyl-alpha-D-glucosamine 1-phosphate + CoA + H(+). The catalysed reaction is N-acetyl-alpha-D-glucosamine 1-phosphate + UTP + H(+) = UDP-N-acetyl-alpha-D-glucosamine + diphosphate. Its pathway is nucleotide-sugar biosynthesis; UDP-N-acetyl-alpha-D-glucosamine biosynthesis; N-acetyl-alpha-D-glucosamine 1-phosphate from alpha-D-glucosamine 6-phosphate (route II): step 2/2. The protein operates within nucleotide-sugar biosynthesis; UDP-N-acetyl-alpha-D-glucosamine biosynthesis; UDP-N-acetyl-alpha-D-glucosamine from N-acetyl-alpha-D-glucosamine 1-phosphate: step 1/1. It participates in bacterial outer membrane biogenesis; LPS lipid A biosynthesis. Catalyzes the last two sequential reactions in the de novo biosynthetic pathway for UDP-N-acetylglucosamine (UDP-GlcNAc). The C-terminal domain catalyzes the transfer of acetyl group from acetyl coenzyme A to glucosamine-1-phosphate (GlcN-1-P) to produce N-acetylglucosamine-1-phosphate (GlcNAc-1-P), which is converted into UDP-GlcNAc by the transfer of uridine 5-monophosphate (from uridine 5-triphosphate), a reaction catalyzed by the N-terminal domain. The polypeptide is Bifunctional protein GlmU (Nitratiruptor sp. (strain SB155-2)).